Here is a 320-residue protein sequence, read N- to C-terminus: Transcription factor NAI1 (320 aa).

The segment at 53–105 is disordered; the sequence is TKQMKTNNNMNSTSSSPSSSSSSGSRTSQVISFGSPDTKTNPVETSLNFSNQV. Residues 58 to 80 show a composition bias toward low complexity; it reads TNNNMNSTSSSPSSSSSSGSRTS. Residues 81–105 show a composition bias toward polar residues; the sequence is QVISFGSPDTKTNPVETSLNFSNQV. One can recognise a bHLH domain in the interval 128 to 177; the sequence is HLLKEHVLAERKRRQKLNERLIALSALLPGLKKTDKATVLEDAIKHLKQL.

In terms of assembly, homodimer. In terms of tissue distribution, expressed constitutively in roots, leaves, stems, and flowers.

It localises to the nucleus. Transcription activator that regulates the expression of at least NAI2, PYK10 and PBP1. Required for and mediates the formation of endoplasmic reticulum bodies (ER bodies). Involved in the symbiotic interactions with the endophytes of the Sebacinaceae fungus family, such as Piriformospora indica and Sebacina. The protein is Transcription factor NAI1 (NAI1) of Arabidopsis thaliana (Mouse-ear cress).